The chain runs to 265 residues: Energy-coupling factor transporter ATP-binding protein EcfA1 (265 aa).

The ABC transporter domain maps to 2 to 236 (IKIKNLVFRY…KEIVELAKID (235 aa)). 36–43 (GHNGSGKS) is a binding site for ATP.

It belongs to the ABC transporter superfamily. Energy-coupling factor EcfA family. Forms a stable energy-coupling factor (ECF) transporter complex composed of 2 membrane-embedded substrate-binding proteins (S component), 2 ATP-binding proteins (A component) and 2 transmembrane proteins (T component).

It localises to the cell membrane. Functionally, ATP-binding (A) component of a common energy-coupling factor (ECF) ABC-transporter complex. Unlike classic ABC transporters this ECF transporter provides the energy necessary to transport a number of different substrates. In Mycoplasmopsis pulmonis (strain UAB CTIP) (Mycoplasma pulmonis), this protein is Energy-coupling factor transporter ATP-binding protein EcfA1.